Reading from the N-terminus, the 70-residue chain is Putative membrane protein insertion efficiency factor (70 aa).

The protein belongs to the UPF0161 family.

The protein resides in the cell inner membrane. In terms of biological role, could be involved in insertion of integral membrane proteins into the membrane. The chain is Putative membrane protein insertion efficiency factor from Methylobacillus flagellatus (strain ATCC 51484 / DSM 6875 / VKM B-1610 / KT).